We begin with the raw amino-acid sequence, 320 residues long: Cytochrome f (320 aa).

The first 35 residues, 1–35 (MQMRNTFSWIKEEIIRFIAVSLIIYIITRAPISNA), serve as a signal peptide directing secretion. Residues Tyr-36, Cys-56, Cys-59, and His-60 each coordinate heme. A helical membrane pass occupies residues 286-306 (VQGLLLFLASIILAQIFLVLK).

It belongs to the cytochrome f family. The 4 large subunits of the cytochrome b6-f complex are cytochrome b6, subunit IV (17 kDa polypeptide, petD), cytochrome f and the Rieske protein, while the 4 small subunits are PetG, PetL, PetM and PetN. The complex functions as a dimer. Requires heme as cofactor.

The protein localises to the plastid. Its subcellular location is the chloroplast thylakoid membrane. Functionally, component of the cytochrome b6-f complex, which mediates electron transfer between photosystem II (PSII) and photosystem I (PSI), cyclic electron flow around PSI, and state transitions. The protein is Cytochrome f of Morus indica (Mulberry).